The primary structure comprises 124 residues: Holo-[acyl-carrier-protein] synthase (124 aa).

Mg(2+) is bound by residues Asp-7 and Glu-55.

Belongs to the P-Pant transferase superfamily. AcpS family. The cofactor is Mg(2+).

The protein localises to the cytoplasm. It catalyses the reaction apo-[ACP] + CoA = holo-[ACP] + adenosine 3',5'-bisphosphate + H(+). In terms of biological role, transfers the 4'-phosphopantetheine moiety from coenzyme A to a Ser of acyl-carrier-protein. This chain is Holo-[acyl-carrier-protein] synthase, found in Borrelia garinii subsp. bavariensis (strain ATCC BAA-2496 / DSM 23469 / PBi) (Borreliella bavariensis).